The sequence spans 121 residues: Large ribosomal subunit protein uL18 (121 aa).

This sequence belongs to the universal ribosomal protein uL18 family. Part of the 50S ribosomal subunit; part of the 5S rRNA/L5/L18/L25 subcomplex. Contacts the 5S and 23S rRNAs.

Functionally, this is one of the proteins that bind and probably mediate the attachment of the 5S RNA into the large ribosomal subunit, where it forms part of the central protuberance. This is Large ribosomal subunit protein uL18 from Methylibium petroleiphilum (strain ATCC BAA-1232 / LMG 22953 / PM1).